Here is a 382-residue protein sequence, read N- to C-terminus: MSRDLFTSESVSEGHPDKIADQISDAVLDAILKQDKKARVACETYVKTGMVMVGGEITTDAWVDIEEITRNTVRNIGYTSSEMGFDADSCAILNVIGKQSPDINQGVDRSDPREQGAGDQGLMFGYATNETDVFMPAPITYAHHLVKRQAKVRKNKTLPWLRPDAKSQVTFAYDHGKIVGIDAVVLSTQHSEDIKQEDLVEAVMEEIIKPVLPAEWLSERTKYFINPTGRFVIGGPVGDCGLTGRKIIVDTYGGSARHGGGAFSGKDPSKVDRSAAYAARYVAKNIVAAGLADRCEIQVSYAIGVAEPTSISVETFGTEKVKKDLIIQLIREHFDLRPYGLIEMLNLIQPIYQSTAAYGHFGRNEFPWEALDKVEALKAGAF.

His-15 serves as a coordination point for ATP. Asp-17 serves as a coordination point for Mg(2+). Residue Glu-43 participates in K(+) binding. Residues Glu-56 and Gln-99 each coordinate L-methionine. A flexible loop region spans residues 99–109 (QSPDINQGVDR). ATP is bound by residues 164–166 (DAK), 230–231 (RF), Asp-239, 245–246 (RK), Ala-262, and Lys-266. Asp-239 serves as a coordination point for L-methionine. Lys-270 contacts L-methionine.

Belongs to the AdoMet synthase family. As to quaternary structure, homotetramer; dimer of dimers. It depends on Mg(2+) as a cofactor. Requires K(+) as cofactor.

The protein localises to the cytoplasm. The catalysed reaction is L-methionine + ATP + H2O = S-adenosyl-L-methionine + phosphate + diphosphate. Its pathway is amino-acid biosynthesis; S-adenosyl-L-methionine biosynthesis; S-adenosyl-L-methionine from L-methionine: step 1/1. Functionally, catalyzes the formation of S-adenosylmethionine (AdoMet) from methionine and ATP. The overall synthetic reaction is composed of two sequential steps, AdoMet formation and the subsequent tripolyphosphate hydrolysis which occurs prior to release of AdoMet from the enzyme. The polypeptide is S-adenosylmethionine synthase (Psychromonas ingrahamii (strain DSM 17664 / CCUG 51855 / 37)).